Here is a 109-residue protein sequence, read N- to C-terminus: Nucleoid-associated protein Asuc_0997 (109 aa).

Positions 1 to 23 (MFGKGGLGGLMKQAQQMQERMQK) are disordered.

The protein belongs to the YbaB/EbfC family. In terms of assembly, homodimer.

The protein resides in the cytoplasm. It is found in the nucleoid. Functionally, binds to DNA and alters its conformation. May be involved in regulation of gene expression, nucleoid organization and DNA protection. This is Nucleoid-associated protein Asuc_0997 from Actinobacillus succinogenes (strain ATCC 55618 / DSM 22257 / CCUG 43843 / 130Z).